A 258-amino-acid chain; its full sequence is Glutamate racemase (258 aa).

Residues 11–12 (DS) and 43–44 (YG) contribute to the substrate site. C74 (proton donor/acceptor) is an active-site residue. A substrate-binding site is contributed by 75–76 (NT). Catalysis depends on C182, which acts as the Proton donor/acceptor. 183–184 (TH) contacts substrate.

The protein belongs to the aspartate/glutamate racemases family.

It catalyses the reaction L-glutamate = D-glutamate. The protein operates within cell wall biogenesis; peptidoglycan biosynthesis. Functionally, provides the (R)-glutamate required for cell wall biosynthesis. This chain is Glutamate racemase, found in Leptospira borgpetersenii serovar Hardjo-bovis (strain JB197).